The sequence spans 86 residues: Toxin Td1 (86 aa).

The signal sequence occupies residues 1 to 20 (MIRFILFISCFFLIGMVIEC). An LCN-type CS-alpha/beta domain is found at 21 to 83 (KDGYLMEPNG…VWERATNRCG (63 aa)). 4 disulfides stabilise this stretch: C31–C82, C35–C57, C43–C63, and C47–C65. Residue K84 is modified to Lysine amide.

Expressed by the venom gland.

The protein resides in the secreted. Functionally, beta toxins bind voltage-independently at site-4 of sodium channels (Nav) and shift the voltage of activation toward more negative potentials thereby affecting sodium channel activation and promoting spontaneous and repetitive firing. The sequence is that of Toxin Td1 from Tityus discrepans (Venezuelan scorpion).